The chain runs to 493 residues: Ketol-acid reductoisomerase (NADP(+)) (493 aa).

The 195-residue stretch at 14–208 (LDQLGRCRFM…GGDRAGVLES (195 aa)) folds into the KARI N-terminal Rossmann domain. NADP(+)-binding positions include 45–48 (CGAQ), R68, R76, S78, and 108–110 (DKQ). Residue H132 is part of the active site. G158 is an NADP(+) binding site. KARI C-terminal knotted domains lie at 209 to 345 (SFVA…SPKA) and 346 to 486 (DGIK…MTDM). 4 residues coordinate Mg(2+): D217, E221, E390, and E394. Residue S415 participates in substrate binding.

It belongs to the ketol-acid reductoisomerase family. Mg(2+) is required as a cofactor.

It catalyses the reaction (2R)-2,3-dihydroxy-3-methylbutanoate + NADP(+) = (2S)-2-acetolactate + NADPH + H(+). The catalysed reaction is (2R,3R)-2,3-dihydroxy-3-methylpentanoate + NADP(+) = (S)-2-ethyl-2-hydroxy-3-oxobutanoate + NADPH + H(+). It functions in the pathway amino-acid biosynthesis; L-isoleucine biosynthesis; L-isoleucine from 2-oxobutanoate: step 2/4. Its pathway is amino-acid biosynthesis; L-valine biosynthesis; L-valine from pyruvate: step 2/4. In terms of biological role, involved in the biosynthesis of branched-chain amino acids (BCAA). Catalyzes an alkyl-migration followed by a ketol-acid reduction of (S)-2-acetolactate (S2AL) to yield (R)-2,3-dihydroxy-isovalerate. In the isomerase reaction, S2AL is rearranged via a Mg-dependent methyl migration to produce 3-hydroxy-3-methyl-2-ketobutyrate (HMKB). In the reductase reaction, this 2-ketoacid undergoes a metal-dependent reduction by NADPH to yield (R)-2,3-dihydroxy-isovalerate. This Actinobacillus pleuropneumoniae serotype 3 (strain JL03) protein is Ketol-acid reductoisomerase (NADP(+)).